We begin with the raw amino-acid sequence, 168 residues long: CDP-archaeol synthase (168 aa).

5 helical membrane passes run 4–24 (IFEA…PVVL), 51–71 (GFFG…LMFP), 81–101 (VGVA…GSFI), 112–132 (PAVG…AYPL), and 138–158 (GEVL…NVFA).

This sequence belongs to the CDP-archaeol synthase family. Mg(2+) is required as a cofactor.

It is found in the cell membrane. The enzyme catalyses 2,3-bis-O-(geranylgeranyl)-sn-glycerol 1-phosphate + CTP + H(+) = CDP-2,3-bis-O-(geranylgeranyl)-sn-glycerol + diphosphate. Its pathway is membrane lipid metabolism; glycerophospholipid metabolism. Catalyzes the formation of CDP-2,3-bis-(O-geranylgeranyl)-sn-glycerol (CDP-archaeol) from 2,3-bis-(O-geranylgeranyl)-sn-glycerol 1-phosphate (DGGGP) and CTP. This reaction is the third ether-bond-formation step in the biosynthesis of archaeal membrane lipids. The polypeptide is CDP-archaeol synthase (Pyrococcus abyssi (strain GE5 / Orsay)).